The following is a 401-amino-acid chain: O-methyltransferase SAT18 (401 aa).

Aspartate 249 provides a ligand contact to S-adenosyl-L-methionine. Histidine 300 functions as the Proton acceptor in the catalytic mechanism.

The protein belongs to the class I-like SAM-binding methyltransferase superfamily. Cation-independent O-methyltransferase family.

It participates in mycotoxin biosynthesis. Functionally, O-methyltransferase; part of the satratoxin SC3 cluster involved in the biosynthesis of satratoxins, trichothecene mycotoxins that are associated with human food poisonings. Satratoxins are suggested to be made by products of multiple gene clusters (SC1, SC2 and SC3) that encode 21 proteins in all, including polyketide synthases, acetyltransferases, and other enzymes expected to modify the trichothecene skeleton. SC1 encodes 10 proteins, SAT1 to SAT10. The largest are SAT8, which encodes a putative polyketide synthase (PKS) with a conventional non-reducing architecture, and SAT10, a putative protein containing four ankyrin repeats and thus may be involved in protein scaffolding. The putative short-chain reductase SAT3 may assist the PKS in some capacity. SAT6 contains a secretory lipase domain and acts probably as a trichothecene esterase. SAT5 encodes a putative acetyltransferase, and so, with SAT6, may affect endogenous protection from toxicity. The probable transcription factor SAT9 may regulate the expression of the SC1 cluster. SC2 encodes proteins SAT11 to SAT16, the largest of which encodes the putative reducing PKS SAT13. SAT11 is a cytochrome P450 monooxygenase, while SAT14 and SAT16 are probable acetyltransferases. The SC2 cluster may be regulated by the transcription factor SAT15. SC3 is a small cluster that encodes 5 proteins, SAT17 to SAT21. SAT21 is a putative MFS-type transporter which may have a role in exporting secondary metabolites. The four other proteins putatively encoded in SC3 include the taurine hydroxylase-like protein SAT17, the O-methyltransferase SAT18, the acetyltransferase SAT19, and the Cys6-type zinc finger SAT20, the latter being probably involved in regulation of SC3 expression. In Stachybotrys chartarum (strain CBS 109288 / IBT 7711) (Toxic black mold), this protein is O-methyltransferase SAT18.